The sequence spans 78 residues: Defensin-like protein 141 (78 aa).

The signal sequence occupies residues 1-24 (MTKSIISAFFIILILGMMVNEIEG). Cystine bridges form between Cys-31-Cys-76, Cys-40-Cys-59, Cys-45-Cys-70, and Cys-49-Cys-72.

The protein belongs to the DEFL family.

Its subcellular location is the secreted. This chain is Defensin-like protein 141 (LCR3), found in Arabidopsis thaliana (Mouse-ear cress).